The sequence spans 372 residues: 4-hydroxy-3-methylbut-2-en-1-yl diphosphate synthase (flavodoxin) (372 aa).

Residues cysteine 270, cysteine 273, cysteine 305, and glutamate 312 each coordinate [4Fe-4S] cluster.

The protein belongs to the IspG family. The cofactor is [4Fe-4S] cluster.

The enzyme catalyses (2E)-4-hydroxy-3-methylbut-2-enyl diphosphate + oxidized [flavodoxin] + H2O + 2 H(+) = 2-C-methyl-D-erythritol 2,4-cyclic diphosphate + reduced [flavodoxin]. It functions in the pathway isoprenoid biosynthesis; isopentenyl diphosphate biosynthesis via DXP pathway; isopentenyl diphosphate from 1-deoxy-D-xylulose 5-phosphate: step 5/6. Converts 2C-methyl-D-erythritol 2,4-cyclodiphosphate (ME-2,4cPP) into 1-hydroxy-2-methyl-2-(E)-butenyl 4-diphosphate. This is 4-hydroxy-3-methylbut-2-en-1-yl diphosphate synthase (flavodoxin) from Citrobacter koseri (strain ATCC BAA-895 / CDC 4225-83 / SGSC4696).